Consider the following 764-residue polypeptide: FAST kinase domain-containing protein 5, mitochondrial (764 aa).

Residue serine 95 is modified to Phosphoserine. Lysine 507 is modified (N6-acetyllysine). The region spanning 697–757 is the RAP domain; sequence LAIQFTNRNQ…RLEKLAFLHE (61 aa).

It belongs to the FAST kinase family. Found in a complex with GRSF1, DDX28, DHX30 and FASTKD2. Associates with the 12S mitochondrial rRNA (12S mt-rRNA).

Its subcellular location is the mitochondrion matrix. It localises to the mitochondrion nucleoid. In terms of biological role, plays an important role in the processing of non-canonical mitochondrial mRNA precursors. This chain is FAST kinase domain-containing protein 5, mitochondrial (FASTKD5), found in Macaca fascicularis (Crab-eating macaque).